Here is a 183-residue protein sequence, read N- to C-terminus: ATP synthase subunit delta (183 aa).

It belongs to the ATPase delta chain family. As to quaternary structure, F-type ATPases have 2 components, F(1) - the catalytic core - and F(0) - the membrane proton channel. F(1) has five subunits: alpha(3), beta(3), gamma(1), delta(1), epsilon(1). CF(0) has four main subunits: a(1), b(1), b'(1) and c(10-14). The alpha and beta chains form an alternating ring which encloses part of the gamma chain. F(1) is attached to F(0) by a central stalk formed by the gamma and epsilon chains, while a peripheral stalk is formed by the delta, b and b' chains.

It localises to the cellular thylakoid membrane. Functionally, f(1)F(0) ATP synthase produces ATP from ADP in the presence of a proton or sodium gradient. F-type ATPases consist of two structural domains, F(1) containing the extramembraneous catalytic core and F(0) containing the membrane proton channel, linked together by a central stalk and a peripheral stalk. During catalysis, ATP synthesis in the catalytic domain of F(1) is coupled via a rotary mechanism of the central stalk subunits to proton translocation. This protein is part of the stalk that links CF(0) to CF(1). It either transmits conformational changes from CF(0) to CF(1) or is implicated in proton conduction. This Prochlorococcus marinus (strain SARG / CCMP1375 / SS120) protein is ATP synthase subunit delta.